The primary structure comprises 228 residues: uncharacterized protein (228 aa).

One can recognise a tRNA-binding domain in the interval 99 to 207; the sequence is LANKVPFVVC…PKIKVGKPFI (109 aa).

This is an uncharacterized protein from Mycoplasma genitalium (strain ATCC 33530 / DSM 19775 / NCTC 10195 / G37) (Mycoplasmoides genitalium).